A 363-amino-acid chain; its full sequence is tRNA(Met) cytidine acetate ligase (363 aa).

ATP is bound by residues 7–20 (IAEF…HKYL), glycine 96, asparagine 152, and arginine 175.

The protein belongs to the TmcAL family.

The protein localises to the cytoplasm. The enzyme catalyses cytidine(34) in elongator tRNA(Met) + acetate + ATP = N(4)-acetylcytidine(34) in elongator tRNA(Met) + AMP + diphosphate. Catalyzes the formation of N(4)-acetylcytidine (ac(4)C) at the wobble position of elongator tRNA(Met), using acetate and ATP as substrates. First activates an acetate ion to form acetyladenylate (Ac-AMP) and then transfers the acetyl group to tRNA to form ac(4)C34. The polypeptide is tRNA(Met) cytidine acetate ligase (Streptococcus gordonii (strain Challis / ATCC 35105 / BCRC 15272 / CH1 / DL1 / V288)).